We begin with the raw amino-acid sequence, 458 residues long: Photosystem II CP43 reaction center protein (458 aa).

5 helical membrane passes run Leu-54–Ala-78, Leu-119–Asn-140, Lys-163–Thr-185, Arg-240–Ser-260, and Trp-276–Ala-297. Position 352 (Glu-352) interacts with [CaMn4O5] cluster. Residues Arg-432 to Asp-456 traverse the membrane as a helical segment.

This sequence belongs to the PsbB/PsbC family. PsbC subfamily. As to quaternary structure, PSII is composed of 1 copy each of membrane proteins PsbA, PsbB, PsbC, PsbD, PsbE, PsbF, PsbH, PsbI, PsbJ, PsbK, PsbL, PsbM, PsbT, PsbX, PsbY, PsbZ, Psb30/Ycf12, peripheral proteins PsbO, CyanoQ (PsbQ), PsbU, PsbV and a large number of cofactors. It forms dimeric complexes. It depends on Binds multiple chlorophylls and provides some of the ligands for the Ca-4Mn-5O cluster of the oxygen-evolving complex. It may also provide a ligand for a Cl- that is required for oxygen evolution. PSII binds additional chlorophylls, carotenoids and specific lipids. as a cofactor.

It is found in the cellular thylakoid membrane. Functionally, one of the components of the core complex of photosystem II (PSII). It binds chlorophyll and helps catalyze the primary light-induced photochemical processes of PSII. PSII is a light-driven water:plastoquinone oxidoreductase, using light energy to abstract electrons from H(2)O, generating O(2) and a proton gradient subsequently used for ATP formation. The polypeptide is Photosystem II CP43 reaction center protein (Prochlorothrix hollandica).